Consider the following 331-residue polypeptide: dTDP-glucose 4,6-dehydratase (331 aa).

NAD(+)-binding positions include 11 to 12, 33 to 36, 57 to 58, 77 to 81, and T96; these read FI, DALT, DI, and FAAES. Position 81 (S81) interacts with substrate. Residue T120 coordinates substrate. The active-site Proton donor is the D121. Residues E122 and Y147 each act as proton acceptor in the active site. 147–151 serves as a coordination point for NAD(+); sequence YSATK. N176 is a binding site for substrate. N177 is an NAD(+) binding site. Residues 186 to 191, 202 to 204, R211, N246, and 269 to 273 contribute to the substrate site; these read KFIPRQ, KLY, and DRVGH.

The protein belongs to the NAD(P)-dependent epimerase/dehydratase family. dTDP-glucose dehydratase subfamily. In terms of assembly, homodimer. Requires NAD(+) as cofactor.

It carries out the reaction dTDP-alpha-D-glucose = dTDP-4-dehydro-6-deoxy-alpha-D-glucose + H2O. The protein operates within carbohydrate biosynthesis; dTDP-L-rhamnose biosynthesis. Functionally, catalyzes the dehydration of dTDP-D-glucose to form dTDP-6-deoxy-D-xylo-4-hexulose via a three-step process involving oxidation, dehydration and reduction. Involved in the biosynthesis of the dTDP-L-rhamnose which is a component of the critical linker, D-N-acetylglucosamine-L-rhamnose disaccharide, which connects the galactan region of arabinogalactan to peptidoglycan via a phosphodiester linkage. The polypeptide is dTDP-glucose 4,6-dehydratase (rmlB) (Mycobacterium tuberculosis (strain CDC 1551 / Oshkosh)).